The sequence spans 60 residues: Probable tautomerase SAG1079 (60 aa).

P2 acts as the Proton acceptor; via imino nitrogen in catalysis.

It belongs to the 4-oxalocrotonate tautomerase family.

This is Probable tautomerase SAG1079 from Streptococcus agalactiae serotype V (strain ATCC BAA-611 / 2603 V/R).